The sequence spans 229 residues: Transmembrane 4 L6 family member 20 (229 aa).

Residues 1–14 lie on the Lumenal side of the membrane; the sequence is MTCCEGWTSCNGFS. The helical transmembrane segment at 15-35 threads the bilayer; sequence LLVLLLLGVVLNAIPLIVSLV. Residues 36–44 are Cytoplasmic-facing; it reads EEDQFSQNP. The chain crosses the membrane as a helical span at residues 45 to 65; sequence ISCFEWWFPGIIGAGLMAIPA. The Lumenal portion of the chain corresponds to 66–83; that stretch reads TTMSLTARKRACCNNRTG. A helical membrane pass occupies residues 84-104; it reads MFLSSLFSVITVIGALYCMLI. The Cytoplasmic segment spans residues 105–185; it reads SIQALLKGPL…HFDSEENKHR (81 aa). Residues 186–206 traverse the membrane as a helical segment; it reads LIHFSVFLGLLLVGILEVLFG. Residues 207–229 lie on the Lumenal side of the membrane; that stretch reads LSQIVIGFLGCLCGVSKRRSQIV.

Belongs to the L6 tetraspanin family. In terms of processing, glycosylated at Asn-132, Asn-148 and Asn-163 in presence of ceramide which inverts the orientation of TM4SF20 in membranes exposing these residues to the endoplasmic reticulum lumen. Cleaved by signal peptidase at Ser-14 but the peptide does not act as a signal peptide. Cleavage is inhibited by ceramide which inverts the orientation of TM4SF20 in membranes exposing the N-terminus to the cytosol and not to the endoplasmic reticulum lumen. In terms of tissue distribution, expressed in the brain, with high levels in the parietal lobe, hippocampus, pons, white matter and cerebellum.

It localises to the membrane. Its subcellular location is the endoplasmic reticulum membrane. In terms of biological role, polytopic transmembrane protein that inhibits regulated intramembrane proteolysis (RIP) of CREB3L1, inhibiting its activation and the induction of collagen synthesis. In response to ceramide, which alters TM4SF20 membrane topology, stimulates RIP activation of CREB3L1. Ceramide reverses the direction through which transmembrane helices are translocated into the endoplasmic reticulum membrane during translation of TM4SF20, this mechanism is called 'regulated alternative translocation' (RAT) and regulates the function of the transmembrane protein. The sequence is that of Transmembrane 4 L6 family member 20 (TM4SF20) from Homo sapiens (Human).